The sequence spans 289 residues: Phosphatidylserine decarboxylase proenzyme (289 aa).

Catalysis depends on charge relay system; for autoendoproteolytic cleavage activity residues aspartate 89, histidine 146, and serine 252. Serine 252 (schiff-base intermediate with substrate; via pyruvic acid; for decarboxylase activity) is an active-site residue. Serine 252 is subject to Pyruvic acid (Ser); by autocatalysis.

Belongs to the phosphatidylserine decarboxylase family. PSD-B subfamily. Prokaryotic type I sub-subfamily. Heterodimer of a large membrane-associated beta subunit and a small pyruvoyl-containing alpha subunit. It depends on pyruvate as a cofactor. Post-translationally, is synthesized initially as an inactive proenzyme. Formation of the active enzyme involves a self-maturation process in which the active site pyruvoyl group is generated from an internal serine residue via an autocatalytic post-translational modification. Two non-identical subunits are generated from the proenzyme in this reaction, and the pyruvate is formed at the N-terminus of the alpha chain, which is derived from the carboxyl end of the proenzyme. The autoendoproteolytic cleavage occurs by a canonical serine protease mechanism, in which the side chain hydroxyl group of the serine supplies its oxygen atom to form the C-terminus of the beta chain, while the remainder of the serine residue undergoes an oxidative deamination to produce ammonia and the pyruvoyl prosthetic group on the alpha chain. During this reaction, the Ser that is part of the protease active site of the proenzyme becomes the pyruvoyl prosthetic group, which constitutes an essential element of the active site of the mature decarboxylase.

The protein localises to the cell membrane. The enzyme catalyses a 1,2-diacyl-sn-glycero-3-phospho-L-serine + H(+) = a 1,2-diacyl-sn-glycero-3-phosphoethanolamine + CO2. It participates in phospholipid metabolism; phosphatidylethanolamine biosynthesis; phosphatidylethanolamine from CDP-diacylglycerol: step 2/2. In terms of biological role, catalyzes the formation of phosphatidylethanolamine (PtdEtn) from phosphatidylserine (PtdSer). This chain is Phosphatidylserine decarboxylase proenzyme, found in Shewanella sp. (strain W3-18-1).